We begin with the raw amino-acid sequence, 436 residues long: Acetyl-CoA decarbonylase/synthase complex subunit delta (436 aa).

Belongs to the CdhD family. As to quaternary structure, heterodimer of delta and gamma chains. The ACDS complex is made up of alpha, epsilon, beta, gamma and delta chains with a probable stoichiometry of (alpha(2)epsilon(2))(4)-beta(8)-(gamma(1)delta(1))(8).

It participates in one-carbon metabolism; methanogenesis from acetate. Part of a complex that catalyzes the reversible cleavage of acetyl-CoA, allowing growth on acetate as sole source of carbon and energy. Probably maintains the overall quaternary structure of the ACDS complex. The polypeptide is Acetyl-CoA decarbonylase/synthase complex subunit delta (Methanosarcina mazei (strain ATCC BAA-159 / DSM 3647 / Goe1 / Go1 / JCM 11833 / OCM 88) (Methanosarcina frisia)).